A 1136-amino-acid chain; its full sequence is Nitric oxide synthase, inducible (1136 aa).

Zn(2+) contacts are provided by C107 and C112. Heme b is bound at residue C197. Residues Q260, W369, Y370, and E374 each coordinate L-arginine. R378, V459, W460, and F473 together coordinate (6R)-L-erythro-5,6,7,8-tetrahydrobiopterin. Heme b is bound at residue Y488. Residues 512 to 532 form a calmodulin-binding region; sequence LSILAKAVLLASLLLQKTMAA. Residues 536–674 enclose the Flavodoxin-like domain; the sequence is VTVIYATETG…AFRTWAVTAF (139 aa). FMN contacts are provided by T542, E543, T544, K546, S547, S588, T589, S625, C632, E658, and Q662. The region spanning 727–967 is the FAD-binding FR-type domain; sequence KNVIPMKLKF…VRSADGFRLP (241 aa). An NADP(+)-binding site is contributed by R747. Residues H769, R903, Y905, S906, T921, A923, Y927, V940, C941, and S942 each coordinate FAD. Residues T981, R1014, S1043, R1044, K1050, Y1052, Q1054, and D1087 each contribute to the NADP(+) site.

This sequence belongs to the NOS family. As to quaternary structure, homodimer. The cofactor is heme b. FAD serves as cofactor. Requires FMN as cofactor. It depends on (6R)-L-erythro-5,6,7,8-tetrahydrobiopterin as a cofactor.

It localises to the cytoplasm. It is found in the cytosol. It carries out the reaction 2 L-arginine + 3 NADPH + 4 O2 + H(+) = 2 L-citrulline + 2 nitric oxide + 3 NADP(+) + 4 H2O. Not stimulated by calcium/calmodulin. Functionally, produces nitric oxide (NO) which is a messenger molecule with diverse functions throughout the body. NO may serve as both a paracrine and autocrine signal for modulating osteoclast bone resorption. Also has nitrosylase activity and mediates cysteine S-nitrosylation of cytoplasmic target proteins such COX2. The polypeptide is Nitric oxide synthase, inducible (NOS2) (Gallus gallus (Chicken)).